Here is a 440-residue protein sequence, read N- to C-terminus: Serine hydroxymethyltransferase (440 aa).

(6S)-5,6,7,8-tetrahydrofolate is bound by residues leucine 119 and 123 to 125; that span reads GHL. Position 228 is an N6-(pyridoxal phosphate)lysine (lysine 228). 370 to 372 contributes to the (6S)-5,6,7,8-tetrahydrofolate binding site; it reads SPF.

This sequence belongs to the SHMT family. Homodimer. The cofactor is pyridoxal 5'-phosphate.

It localises to the cytoplasm. It carries out the reaction (6R)-5,10-methylene-5,6,7,8-tetrahydrofolate + glycine + H2O = (6S)-5,6,7,8-tetrahydrofolate + L-serine. It participates in one-carbon metabolism; tetrahydrofolate interconversion. The protein operates within amino-acid biosynthesis; glycine biosynthesis; glycine from L-serine: step 1/1. Its function is as follows. Catalyzes the reversible interconversion of serine and glycine with tetrahydrofolate (THF) serving as the one-carbon carrier. This reaction serves as the major source of one-carbon groups required for the biosynthesis of purines, thymidylate, methionine, and other important biomolecules. Also exhibits THF-independent aldolase activity toward beta-hydroxyamino acids, producing glycine and aldehydes, via a retro-aldol mechanism. The chain is Serine hydroxymethyltransferase from Chlorobium luteolum (strain DSM 273 / BCRC 81028 / 2530) (Pelodictyon luteolum).